Reading from the N-terminus, the 154-residue chain is Deoxyuridine 5'-triphosphate nucleotidohydrolase (154 aa).

Substrate contacts are provided by residues 64–66 (RSG), N77, 81–83 (TVD), and K91. Residues 135 to 154 (LADTTRGDGGHGSSGGHASL) are disordered. Residues 144–154 (GHGSSGGHASL) show a composition bias toward gly residues.

Belongs to the dUTPase family. Homotrimer. Requires Mg(2+) as cofactor.

It carries out the reaction dUTP + H2O = dUMP + diphosphate + H(+). The protein operates within pyrimidine metabolism; dUMP biosynthesis; dUMP from dCTP (dUTP route): step 2/2. This enzyme is involved in nucleotide metabolism: it produces dUMP, the immediate precursor of thymidine nucleotides and it decreases the intracellular concentration of dUTP so that uracil cannot be incorporated into DNA. This Mycolicibacterium vanbaalenii (strain DSM 7251 / JCM 13017 / BCRC 16820 / KCTC 9966 / NRRL B-24157 / PYR-1) (Mycobacterium vanbaalenii) protein is Deoxyuridine 5'-triphosphate nucleotidohydrolase.